A 471-amino-acid chain; its full sequence is ATP synthase subunit beta (471 aa).

Residue 156–163 participates in ATP binding; sequence GGAGVGKT.

Belongs to the ATPase alpha/beta chains family. As to quaternary structure, F-type ATPases have 2 components, CF(1) - the catalytic core - and CF(0) - the membrane proton channel. CF(1) has five subunits: alpha(3), beta(3), gamma(1), delta(1), epsilon(1). CF(0) has three main subunits: a(1), b(2) and c(9-12). The alpha and beta chains form an alternating ring which encloses part of the gamma chain. CF(1) is attached to CF(0) by a central stalk formed by the gamma and epsilon chains, while a peripheral stalk is formed by the delta and b chains.

It localises to the cell membrane. It carries out the reaction ATP + H2O + 4 H(+)(in) = ADP + phosphate + 5 H(+)(out). Functionally, produces ATP from ADP in the presence of a proton gradient across the membrane. The catalytic sites are hosted primarily by the beta subunits. The sequence is that of ATP synthase subunit beta from Lawsonia intracellularis (strain PHE/MN1-00).